The chain runs to 1040 residues: FHF complex subunit HOOK-interacting protein 1A (1040 aa).

Disordered regions lie at residues Pro555–Pro613, Ser653–Pro746, and Leu769–Glu808. Residues Ser653–Ala664 are compositionally biased toward basic and acidic residues. The segment covering Val677–Glu690 has biased composition (polar residues). Basic and acidic residues-rich tracts occupy residues Glu696 to Glu719 and Thr783 to Leu804.

It belongs to the FHIP family. In terms of assembly, may be a component of the FTS/Hook/FHIP complex (FHF complex), composed of AKTIP/FTS, FHIP1B, and one or more members of the Hook family of proteins HOOK1, HOOK2, and HOOK3. May interact directly with AKTIP/FTS.

Probable component of the FTS/Hook/FHIP complex (FHF complex). FHF complex promotes the distribution of AP-4 complex to the perinuclear area of the cell. The sequence is that of FHF complex subunit HOOK-interacting protein 1A from Homo sapiens (Human).